The sequence spans 379 residues: Succinyl-diaminopimelate desuccinylase (379 aa).

His-70 provides a ligand contact to Zn(2+). The active site involves Asp-72. Asp-103 provides a ligand contact to Zn(2+). Catalysis depends on Glu-137, which acts as the Proton acceptor. Residues Glu-138, Glu-166, and His-352 each coordinate Zn(2+).

The protein belongs to the peptidase M20A family. DapE subfamily. As to quaternary structure, homodimer. Zn(2+) is required as a cofactor. It depends on Co(2+) as a cofactor.

It carries out the reaction N-succinyl-(2S,6S)-2,6-diaminopimelate + H2O = (2S,6S)-2,6-diaminopimelate + succinate. Its pathway is amino-acid biosynthesis; L-lysine biosynthesis via DAP pathway; LL-2,6-diaminopimelate from (S)-tetrahydrodipicolinate (succinylase route): step 3/3. In terms of biological role, catalyzes the hydrolysis of N-succinyl-L,L-diaminopimelic acid (SDAP), forming succinate and LL-2,6-diaminopimelate (DAP), an intermediate involved in the bacterial biosynthesis of lysine and meso-diaminopimelic acid, an essential component of bacterial cell walls. In Burkholderia orbicola (strain MC0-3), this protein is Succinyl-diaminopimelate desuccinylase.